The primary structure comprises 1068 residues: Retinoblastoma-like protein 1 (1068 aa).

Phosphothreonine; by CDK2 is present on T332. Position 369 is a phosphothreonine; by CDK4 (T369). T385 bears the Phosphothreonine; by CDK2 mark. Residues T385–K584 are domain A. Positions T385–Y949 are pocket; binds T and E1A. The interval V585–N780 is spacer. Residue S640 is modified to Phosphoserine; by CDK2 and CDK4. 2 positions are modified to phosphoserine: S650 and S749. S762 carries the post-translational modification Phosphoserine; by CDK2. The segment at R781–Y949 is domain B. 2 positions are modified to phosphoserine; by CDK2 and CDK4: S964 and S975. S988 is modified (phosphoserine; by CDK2). Phosphothreonine; by CDK2 is present on T997. Position 1009 is a phosphoserine; by CDK2 (S1009). A Phosphoserine modification is found at S1041.

Belongs to the retinoblastoma protein (RB) family. In terms of assembly, component of the DREAM complex (also named LINC complex) at least composed of E2F4, E2F5, LIN9, LIN37, LIN52, LIN54, MYBL1, MYBL2, RBL1, RBL2, RBBP4, TFDP1 and TFDP2. The complex exists in quiescent cells where it represses cell cycle-dependent genes. It dissociates in S phase when LIN9, LIN37, LIN52 and LIN54 form a subcomplex that binds to MYBL2. Interacts with AATF. Interacts with KDM5A. Interacts with KMT5B and KMT5C. Interacts with USP4. Interacts with RBBP9. (Microbial infection) Interacts with SV40 and JC virus large T antigens. Large T antigen, but not E1A, binds only to the unphosphorylated form. As to quaternary structure, (Microbial infection) Interacts with JC virus small t antigen. Cell-cycle arrest properties are inactivated by phosphorylation on Thr-332, Ser-640, Ser-964 and Ser-975 by CDK4.

It localises to the nucleus. Functionally, key regulator of entry into cell division. Directly involved in heterochromatin formation by maintaining overall chromatin structure and, in particular, that of constitutive heterochromatin by stabilizing histone methylation. Recruits and targets histone methyltransferases KMT5B and KMT5C, leading to epigenetic transcriptional repression. Controls histone H4 'Lys-20' trimethylation. Probably acts as a transcription repressor by recruiting chromatin-modifying enzymes to promoters. Potent inhibitor of E2F-mediated trans-activation. May act as a tumor suppressor. The chain is Retinoblastoma-like protein 1 (RBL1) from Homo sapiens (Human).